A 566-amino-acid polypeptide reads, in one-letter code: Proline--tRNA ligase (566 aa).

It belongs to the class-II aminoacyl-tRNA synthetase family. ProS type 1 subfamily. Homodimer.

The protein resides in the cytoplasm. It catalyses the reaction tRNA(Pro) + L-proline + ATP = L-prolyl-tRNA(Pro) + AMP + diphosphate. Its function is as follows. Catalyzes the attachment of proline to tRNA(Pro) in a two-step reaction: proline is first activated by ATP to form Pro-AMP and then transferred to the acceptor end of tRNA(Pro). As ProRS can inadvertently accommodate and process non-cognate amino acids such as alanine and cysteine, to avoid such errors it has two additional distinct editing activities against alanine. One activity is designated as 'pretransfer' editing and involves the tRNA(Pro)-independent hydrolysis of activated Ala-AMP. The other activity is designated 'posttransfer' editing and involves deacylation of mischarged Ala-tRNA(Pro). The misacylated Cys-tRNA(Pro) is not edited by ProRS. The polypeptide is Proline--tRNA ligase (Exiguobacterium sibiricum (strain DSM 17290 / CCUG 55495 / CIP 109462 / JCM 13490 / 255-15)).